A 243-amino-acid polypeptide reads, in one-letter code: 1-(5-phosphoribosyl)-5-[(5-phosphoribosylamino)methylideneamino] imidazole-4-carboxamide isomerase (243 aa).

Residue Asp8 is the Proton acceptor of the active site. The active-site Proton donor is Asp129.

The protein belongs to the HisA/HisF family.

The protein resides in the cytoplasm. It carries out the reaction 1-(5-phospho-beta-D-ribosyl)-5-[(5-phospho-beta-D-ribosylamino)methylideneamino]imidazole-4-carboxamide = 5-[(5-phospho-1-deoxy-D-ribulos-1-ylimino)methylamino]-1-(5-phospho-beta-D-ribosyl)imidazole-4-carboxamide. It functions in the pathway amino-acid biosynthesis; L-histidine biosynthesis; L-histidine from 5-phospho-alpha-D-ribose 1-diphosphate: step 4/9. The polypeptide is 1-(5-phosphoribosyl)-5-[(5-phosphoribosylamino)methylideneamino] imidazole-4-carboxamide isomerase (Carboxydothermus hydrogenoformans (strain ATCC BAA-161 / DSM 6008 / Z-2901)).